Reading from the N-terminus, the 67-residue chain is Large ribosomal subunit protein bL35 (67 aa).

Belongs to the bacterial ribosomal protein bL35 family.

In Paramagnetospirillum magneticum (strain ATCC 700264 / AMB-1) (Magnetospirillum magneticum), this protein is Large ribosomal subunit protein bL35.